The following is a 375-amino-acid chain: Succinyl-diaminopimelate desuccinylase (375 aa).

H66 lines the Zn(2+) pocket. D68 is a catalytic residue. D99 serves as a coordination point for Zn(2+). E130 functions as the Proton acceptor in the catalytic mechanism. Zn(2+)-binding residues include E131, E159, and H345.

Belongs to the peptidase M20A family. DapE subfamily. As to quaternary structure, homodimer. Zn(2+) is required as a cofactor. It depends on Co(2+) as a cofactor.

It catalyses the reaction N-succinyl-(2S,6S)-2,6-diaminopimelate + H2O = (2S,6S)-2,6-diaminopimelate + succinate. It participates in amino-acid biosynthesis; L-lysine biosynthesis via DAP pathway; LL-2,6-diaminopimelate from (S)-tetrahydrodipicolinate (succinylase route): step 3/3. Its function is as follows. Catalyzes the hydrolysis of N-succinyl-L,L-diaminopimelic acid (SDAP), forming succinate and LL-2,6-diaminopimelate (DAP), an intermediate involved in the bacterial biosynthesis of lysine and meso-diaminopimelic acid, an essential component of bacterial cell walls. The protein is Succinyl-diaminopimelate desuccinylase of Xanthobacter autotrophicus (strain ATCC BAA-1158 / Py2).